Here is a 146-residue protein sequence, read N- to C-terminus: Ribonuclease VapC41 (146 aa).

The 140-residue stretch at 3-142 (LCDTNIWLAL…FTQYGGIELR (140 aa)) folds into the PINc domain. Residues Asp-5 and Asp-112 each coordinate Mg(2+).

This sequence belongs to the PINc/VapC protein family. Mg(2+) is required as a cofactor.

Toxic component of a type II toxin-antitoxin (TA) system. An RNase. Its toxic effect is neutralized by coexpression with cognate antitoxin VapB41. In Mycobacterium tuberculosis (strain CDC 1551 / Oshkosh), this protein is Ribonuclease VapC41.